Reading from the N-terminus, the 648-residue chain is DNA gyrase subunit B (648 aa).

One can recognise a Toprim domain in the interval 427 to 541; that stretch reads TELFIVEGDS…AGYVYIAQPP (115 aa). 3 residues coordinate Mg(2+): E433, D506, and D508.

The protein belongs to the type II topoisomerase GyrB family. As to quaternary structure, heterotetramer, composed of two GyrA and two GyrB chains. In the heterotetramer, GyrA contains the active site tyrosine that forms a transient covalent intermediate with DNA, while GyrB binds cofactors and catalyzes ATP hydrolysis. Mg(2+) serves as cofactor. It depends on Mn(2+) as a cofactor. Ca(2+) is required as a cofactor.

It is found in the cytoplasm. The enzyme catalyses ATP-dependent breakage, passage and rejoining of double-stranded DNA.. Its function is as follows. A type II topoisomerase that negatively supercoils closed circular double-stranded (ds) DNA in an ATP-dependent manner to modulate DNA topology and maintain chromosomes in an underwound state. Negative supercoiling favors strand separation, and DNA replication, transcription, recombination and repair, all of which involve strand separation. Also able to catalyze the interconversion of other topological isomers of dsDNA rings, including catenanes and knotted rings. Type II topoisomerases break and join 2 DNA strands simultaneously in an ATP-dependent manner. The sequence is that of DNA gyrase subunit B from Streptococcus pneumoniae serotype 4 (strain ATCC BAA-334 / TIGR4).